Consider the following 59-residue polypeptide: Pycsar effector protein MePycTM (59 aa).

A helical transmembrane segment spans residues 36–56; the sequence is VAVAIYLLGAAMLSSGAAVLA.

It localises to the cell membrane. Pycsar (pyrimidine cyclase system for antiphage resistance) provides immunity against bacteriophage. The pyrimidine cyclase (PycC) synthesizes cyclic nucleotides in response to infection; these serve as specific second messenger signals. The signals activate the adjacent effector, leading to bacterial cell death and abortive phage infection. A clade D Pycsar system. Its function is as follows. The effector gene of a two-gene Pycsar system. Expression of this and adjacent uridylate cyclase MePycC (AC A0A1C5G2V9) probably confers resistance to bacteriophage. The genes are probably only expressed in response to bacteriophage infection. Probably only responds to cUMP (produced by its cognate NTP cyclase), acts by impairing membrane integrity. This Micromonospora echinofusca protein is Pycsar effector protein MePycTM.